We begin with the raw amino-acid sequence, 223 residues long: Deoxyribose-phosphate aldolase (223 aa).

D91 (proton donor/acceptor) is an active-site residue. K153 (schiff-base intermediate with acetaldehyde) is an active-site residue. K182 (proton donor/acceptor) is an active-site residue.

The protein belongs to the DeoC/FbaB aldolase family. DeoC type 1 subfamily.

The protein localises to the cytoplasm. It carries out the reaction 2-deoxy-D-ribose 5-phosphate = D-glyceraldehyde 3-phosphate + acetaldehyde. Its pathway is carbohydrate degradation; 2-deoxy-D-ribose 1-phosphate degradation; D-glyceraldehyde 3-phosphate and acetaldehyde from 2-deoxy-alpha-D-ribose 1-phosphate: step 2/2. In terms of biological role, catalyzes a reversible aldol reaction between acetaldehyde and D-glyceraldehyde 3-phosphate to generate 2-deoxy-D-ribose 5-phosphate. The polypeptide is Deoxyribose-phosphate aldolase (Yersinia pseudotuberculosis serotype O:1b (strain IP 31758)).